Here is a 67-residue protein sequence, read N- to C-terminus: ATP synthase F(0) complex subunit 8 (67 aa).

The helical transmembrane segment at 8 to 24 threads the bilayer; it reads TWFINIVSMILTLFIVF. The residue at position 54 (K54) is an N6-acetyllysine; alternate. K54 is modified (N6-succinyllysine; alternate). At K57 the chain carries N6-acetyllysine.

This sequence belongs to the ATPase protein 8 family. In terms of assembly, component of the ATP synthase complex composed at least of ATP5F1A/subunit alpha, ATP5F1B/subunit beta, ATP5MC1/subunit c (homooctomer), MT-ATP6/subunit a, MT-ATP8/subunit 8, ATP5ME/subunit e, ATP5MF/subunit f, ATP5MG/subunit g, ATP5MK/subunit k, ATP5MJ/subunit j, ATP5F1C/subunit gamma, ATP5F1D/subunit delta, ATP5F1E/subunit epsilon, ATP5PF/subunit F6, ATP5PB/subunit b, ATP5PD/subunit d, ATP5PO/subunit OSCP. ATP synthase complex consists of a soluble F(1) head domain (subunits alpha(3) and beta(3)) - the catalytic core - and a membrane F(0) domain - the membrane proton channel (subunits c, a, 8, e, f, g, k and j). These two domains are linked by a central stalk (subunits gamma, delta, and epsilon) rotating inside the F1 region and a stationary peripheral stalk (subunits F6, b, d, and OSCP). Interacts with PRICKLE3.

The protein localises to the mitochondrion membrane. Its function is as follows. Subunit 8, of the mitochondrial membrane ATP synthase complex (F(1)F(0) ATP synthase or Complex V) that produces ATP from ADP in the presence of a proton gradient across the membrane which is generated by electron transport complexes of the respiratory chain. ATP synthase complex consist of a soluble F(1) head domain - the catalytic core - and a membrane F(1) domain - the membrane proton channel. These two domains are linked by a central stalk rotating inside the F(1) region and a stationary peripheral stalk. During catalysis, ATP synthesis in the catalytic domain of F(1) is coupled via a rotary mechanism of the central stalk subunits to proton translocation. In vivo, can only synthesize ATP although its ATP hydrolase activity can be activated artificially in vitro. Part of the complex F(0) domain. The protein is ATP synthase F(0) complex subunit 8 of Equus asinus (Donkey).